A 471-amino-acid polypeptide reads, in one-letter code: E3 ubiquitin-protein ligase TRIM38 (471 aa).

The RING-type zinc-finger motif lies at 16 to 62 (CSICKAMMSHPVSINCGHSYCKSCIQSYYCNVSPKTGWKMLGCPLCS). The segment at 90–131 (DQDMVCEEHEEKFNRFCEDDGQLLCWRCYWEDRHKGHTLAHV) adopts a B box-type zinc-finger fold. Zn(2+)-binding residues include Cys95, His98, Cys117, and His123. In terms of domain architecture, B30.2/SPRY spans 276–471 (CNVSELYFDV…PLFLPAINNQ (196 aa)).

In terms of assembly, interacts (via B30.2/SPRY domain) with TAB2 and TAB3.

It localises to the cytoplasm. It catalyses the reaction S-ubiquitinyl-[E2 ubiquitin-conjugating enzyme]-L-cysteine + [acceptor protein]-L-lysine = [E2 ubiquitin-conjugating enzyme]-L-cysteine + N(6)-ubiquitinyl-[acceptor protein]-L-lysine.. It functions in the pathway protein modification; protein ubiquitination. The protein operates within protein modification; protein sumoylation. In terms of biological role, E3 ubiquitin-protein and E3 SUMO-protein ligase that acts as a regulator of innate immunity. Acts as a negative regulator of type I interferon IFN-beta production by catalyzing 'Lys-48'-linked polyubiquitination of AZI2/NAP1, leading to its degradation. Mediates 'Lys-48'-linked polyubiquitination and proteasomal degradation of the critical TLR adapter TICAM1, inhibiting TLR3-mediated type I interferon signaling. Acts as a positive regulator of the cGAS-STING pathway by acting as a E3 SUMO-protein ligase: mediates sumoylation of CGAS and STING, preventing their degradation and thereby activating the innate immune response to DNA virus. Also acts as a negative regulator of NF-kappa-B signaling independently of its E3 protein ligase activity by promoting lysosome-dependent degradation of TAB2 and TAB3 adapters. This is E3 ubiquitin-protein ligase TRIM38 from Mus musculus (Mouse).